A 223-amino-acid chain; its full sequence is Endonuclease NucS (223 aa).

It belongs to the NucS endonuclease family.

It localises to the cytoplasm. Its function is as follows. Cleaves both 3' and 5' ssDNA extremities of branched DNA structures. This chain is Endonuclease NucS, found in Streptomyces coelicolor (strain ATCC BAA-471 / A3(2) / M145).